The sequence spans 167 residues: MALNLQGKQAIVAEVKEVAKGALSAVVADSRGVTVDKMTELRKAGREAGVHMQVVRNTLLSRAVEGTPFECLKDTFVGPTLIAFSSEHPGAAARLFKAFAKDNAKFEVKAAAFEGELIPAAQIDRLATLPTYEEAIARLMGTMKEAAAGKLVRTLAALRDQKEAEAA.

This sequence belongs to the universal ribosomal protein uL10 family. As to quaternary structure, part of the ribosomal stalk of the 50S ribosomal subunit. The N-terminus interacts with L11 and the large rRNA to form the base of the stalk. The C-terminus forms an elongated spine to which L12 dimers bind in a sequential fashion forming a multimeric L10(L12)X complex.

In terms of biological role, forms part of the ribosomal stalk, playing a central role in the interaction of the ribosome with GTP-bound translation factors. This Yersinia enterocolitica serotype O:8 / biotype 1B (strain NCTC 13174 / 8081) protein is Large ribosomal subunit protein uL10.